A 131-amino-acid chain; its full sequence is uncharacterized protein (131 aa).

A helical transmembrane segment spans residues 17-39 (VILLILILLPVVFLHIMLATWGL).

Its subcellular location is the membrane. This is an uncharacterized protein from Archaeoglobus fulgidus (strain ATCC 49558 / DSM 4304 / JCM 9628 / NBRC 100126 / VC-16).